The primary structure comprises 224 residues: Orotidine 5'-phosphate decarboxylase (224 aa).

Residues D10, K32, 59–68, T115, R175, Q184, G204, and R205 each bind substrate; that span reads DLKLHDIPNT. K61 serves as the catalytic Proton donor.

It belongs to the OMP decarboxylase family. Type 1 subfamily. In terms of assembly, homodimer.

It carries out the reaction orotidine 5'-phosphate + H(+) = UMP + CO2. The protein operates within pyrimidine metabolism; UMP biosynthesis via de novo pathway; UMP from orotate: step 2/2. In terms of biological role, catalyzes the decarboxylation of orotidine 5'-monophosphate (OMP) to uridine 5'-monophosphate (UMP). The polypeptide is Orotidine 5'-phosphate decarboxylase (Erythrobacter litoralis (strain HTCC2594)).